Here is a 198-residue protein sequence, read N- to C-terminus: Ribonuclease HII (198 aa).

The RNase H type-2 domain maps to glycine 14–leucine 198. A divalent metal cation contacts are provided by aspartate 20, glutamate 21, and aspartate 112.

It belongs to the RNase HII family. Mn(2+) is required as a cofactor. Mg(2+) serves as cofactor.

The protein localises to the cytoplasm. The enzyme catalyses Endonucleolytic cleavage to 5'-phosphomonoester.. In terms of biological role, endonuclease that specifically degrades the RNA of RNA-DNA hybrids. This is Ribonuclease HII from Wolbachia pipientis wMel.